A 118-amino-acid chain; its full sequence is Large ribosomal subunit protein bL20 (118 aa).

This sequence belongs to the bacterial ribosomal protein bL20 family.

In terms of biological role, binds directly to 23S ribosomal RNA and is necessary for the in vitro assembly process of the 50S ribosomal subunit. It is not involved in the protein synthesizing functions of that subunit. The chain is Large ribosomal subunit protein bL20 from Pseudomonas syringae pv. syringae (strain B728a).